The following is a 644-amino-acid chain: Serine/threonine kinase YeaG (644 aa).

It belongs to the PrkA family. Monomer.

The protein resides in the cytoplasm. It carries out the reaction L-seryl-[protein] + ATP = O-phospho-L-seryl-[protein] + ADP + H(+). It catalyses the reaction L-threonyl-[protein] + ATP = O-phospho-L-threonyl-[protein] + ADP + H(+). Functionally, kinase that plays a role in the adaptation to sustained nitrogen starvation. The polypeptide is Serine/threonine kinase YeaG (yeaG) (Escherichia coli O157:H7).